The sequence spans 247 residues: Ribosomal RNA small subunit methyltransferase J (247 aa).

S-adenosyl-L-methionine is bound by residues 106 to 107, 122 to 123, and aspartate 168; these read RD and ER.

It belongs to the methyltransferase superfamily. RsmJ family.

It is found in the cytoplasm. The catalysed reaction is guanosine(1516) in 16S rRNA + S-adenosyl-L-methionine = N(2)-methylguanosine(1516) in 16S rRNA + S-adenosyl-L-homocysteine + H(+). Specifically methylates the guanosine in position 1516 of 16S rRNA. The polypeptide is Ribosomal RNA small subunit methyltransferase J (Alcanivorax borkumensis (strain ATCC 700651 / DSM 11573 / NCIMB 13689 / SK2)).